Consider the following 290-residue polypeptide: Inactive tau-tubulin kinase ttbk-6 (290 aa).

The 240-residue stretch at 1–240 folds into the Protein kinase domain; sequence MEDHVLKKLN…FWQVMENEKI (240 aa). 2 disordered regions span residues 244 to 263 and 268 to 290; these read SKFDWENEEPDMSVPPAAWE and RYFQSNPLEINGPPTPAEVDFVL.

Belongs to the protein kinase superfamily. CK1 Ser/Thr protein kinase family.

The sequence is that of Inactive tau-tubulin kinase ttbk-6 from Caenorhabditis elegans.